The following is a 330-amino-acid chain: Peroxidase 55 (330 aa).

An N-terminal signal peptide occupies residues 1–30 (MDIRSDDAKKPMMMWFLGMLLFSMVAESNA). 4 disulfides stabilise this stretch: C41–C121, C74–C79, C127–C326, and C206–C238. The active-site Proton acceptor is H72. Positions 73, 76, 78, 80, and 82 each coordinate Ca(2+). P169 is a binding site for substrate. H199 provides a ligand contact to heme b. Position 200 (T200) interacts with Ca(2+). N215 carries N-linked (GlcNAc...) asparagine glycosylation. Ca(2+)-binding residues include D250, S253, and D258.

It belongs to the peroxidase family. Classical plant (class III) peroxidase subfamily. Requires heme b as cofactor. The cofactor is Ca(2+). In terms of tissue distribution, slightly expressed in roots.

Its subcellular location is the secreted. It catalyses the reaction 2 a phenolic donor + H2O2 = 2 a phenolic radical donor + 2 H2O. Removal of H(2)O(2), oxidation of toxic reductants, biosynthesis and degradation of lignin, suberization, auxin catabolism, response to environmental stresses such as wounding, pathogen attack and oxidative stress. These functions might be dependent on each isozyme/isoform in each plant tissue. The chain is Peroxidase 55 (PER55) from Arabidopsis thaliana (Mouse-ear cress).